The chain runs to 242 residues: Biosynthetic peptidoglycan transglycosylase (242 aa).

Residues 19–39 (ILAALAVFWGGGIALFSVVPV) form a helical membrane-spanning segment.

This sequence belongs to the glycosyltransferase 51 family.

Its subcellular location is the cell inner membrane. It catalyses the reaction [GlcNAc-(1-&gt;4)-Mur2Ac(oyl-L-Ala-gamma-D-Glu-L-Lys-D-Ala-D-Ala)](n)-di-trans,octa-cis-undecaprenyl diphosphate + beta-D-GlcNAc-(1-&gt;4)-Mur2Ac(oyl-L-Ala-gamma-D-Glu-L-Lys-D-Ala-D-Ala)-di-trans,octa-cis-undecaprenyl diphosphate = [GlcNAc-(1-&gt;4)-Mur2Ac(oyl-L-Ala-gamma-D-Glu-L-Lys-D-Ala-D-Ala)](n+1)-di-trans,octa-cis-undecaprenyl diphosphate + di-trans,octa-cis-undecaprenyl diphosphate + H(+). It participates in cell wall biogenesis; peptidoglycan biosynthesis. Peptidoglycan polymerase that catalyzes glycan chain elongation from lipid-linked precursors. In Salmonella typhi, this protein is Biosynthetic peptidoglycan transglycosylase.